Reading from the N-terminus, the 190-residue chain is Holliday junction branch migration complex subunit RuvA (190 aa).

The segment at 1–64 (MIGRITGTLI…EDAQLLYGFG (64 aa)) is domain I. The domain II stretch occupies residues 65–137 (SSAERSTFRE…MRGKLGADIG (73 aa)). The tract at residues 137-141 (GATPH) is flexible linker. Residues 142–190 (AASGHQSDILNALLALGYSDKESQAALKKLPDGVDVSEGIRLALKALVR) form a domain III region.

Belongs to the RuvA family. As to quaternary structure, homotetramer. Forms an RuvA(8)-RuvB(12)-Holliday junction (HJ) complex. HJ DNA is sandwiched between 2 RuvA tetramers; dsDNA enters through RuvA and exits via RuvB. An RuvB hexamer assembles on each DNA strand where it exits the tetramer. Each RuvB hexamer is contacted by two RuvA subunits (via domain III) on 2 adjacent RuvB subunits; this complex drives branch migration. In the full resolvosome a probable DNA-RuvA(4)-RuvB(12)-RuvC(2) complex forms which resolves the HJ.

Its subcellular location is the cytoplasm. Its function is as follows. The RuvA-RuvB-RuvC complex processes Holliday junction (HJ) DNA during genetic recombination and DNA repair, while the RuvA-RuvB complex plays an important role in the rescue of blocked DNA replication forks via replication fork reversal (RFR). RuvA specifically binds to HJ cruciform DNA, conferring on it an open structure. The RuvB hexamer acts as an ATP-dependent pump, pulling dsDNA into and through the RuvAB complex. HJ branch migration allows RuvC to scan DNA until it finds its consensus sequence, where it cleaves and resolves the cruciform DNA. The protein is Holliday junction branch migration complex subunit RuvA of Bordetella pertussis (strain Tohama I / ATCC BAA-589 / NCTC 13251).